A 232-amino-acid polypeptide reads, in one-letter code: Oxidoreductase 1 (232 aa).

Belongs to the MQO family. The cofactor is FAD.

Functionally, oxidoreductase; part of the gene cluster that mediates the biosynthesis of elsinochromes, pigments consisting of at least four interconvertible tautomers (A, B, C and D) that have a core phenolic quinone to which various side chains are attached and which play an important role in fungal pathogenesis. The non-reducing polyketide synthase PKS1 was proposed to iteratively catalyze decarboxylation between acetyl-CoA and malonyl-CoA subunits for polyketide chain elongation. The released polyketide undergoes cyclization to form an aromatic ring, and proceeds via serial modification steps to produce the heptaketide back- bone of elsinochrome. As elsinochrome has a symmetrical structure, two identical heptaketides are fused to form a core 1,2-dihydrobenzo-perylene ring structure, which can then be successively modified to produce the various derivatives of elsinochrome. Some of these reactions may be cooperatively carried out, at least in part, by the products of RDT1, OXR1 and PKS1. PRF1, embedded within the elsinochrome cluster possibly functions to stabilize some of the biosynthetic enzymes required for elsinochrome production. As prefoldin is a hexamer containing 2 a and 4 b subunits, additional prefoldin subunits, whose coding genes may not immediately link to the elsinochrome biosynthetic gene cluster, are required to fulfill the chaperone function. In addition, no methyltransferase-coding gene exists within the biosynthetic gene cluster, even though elsinochrome has four methyl groups at positions C3, C7, C8 and C12. Apparently, the identified gene cluster does not contain the entire entourage of genes responsible for elsinochrome biosynthesis. Once elsinochrome is synthesized, it must be exported outside the fungal cells, which is probably accomplished by the ECT1 transporter, to avoid toxicity. This is Oxidoreductase 1 from Elsinoe fawcettii (Citrus scab fungus).